We begin with the raw amino-acid sequence, 456 residues long: Exodeoxyribonuclease 7 large subunit (456 aa).

It belongs to the XseA family. In terms of assembly, heterooligomer composed of large and small subunits.

The protein localises to the cytoplasm. It carries out the reaction Exonucleolytic cleavage in either 5'- to 3'- or 3'- to 5'-direction to yield nucleoside 5'-phosphates.. Functionally, bidirectionally degrades single-stranded DNA into large acid-insoluble oligonucleotides, which are then degraded further into small acid-soluble oligonucleotides. This chain is Exodeoxyribonuclease 7 large subunit, found in Lactobacillus johnsonii (strain CNCM I-12250 / La1 / NCC 533).